The following is a 525-amino-acid chain: Peptide chain release factor 3 (525 aa).

A tr-type G domain is found at 9 to 276 (AKRRTFAIIS…GFTTYAPEPQ (268 aa)). GTP contacts are provided by residues 18 to 25 (SHPDAGKT), 86 to 90 (DTPGH), and 140 to 143 (NKFD).

It belongs to the TRAFAC class translation factor GTPase superfamily. Classic translation factor GTPase family. PrfC subfamily.

It is found in the cytoplasm. Functionally, increases the formation of ribosomal termination complexes and stimulates activities of RF-1 and RF-2. It binds guanine nucleotides and has strong preference for UGA stop codons. It may interact directly with the ribosome. The stimulation of RF-1 and RF-2 is significantly reduced by GTP and GDP, but not by GMP. The chain is Peptide chain release factor 3 from Francisella philomiragia subsp. philomiragia (strain ATCC 25017 / CCUG 19701 / FSC 153 / O#319-036).